The chain runs to 86 residues: MEFKIMSTTDKIEQKVIEMVAEKLNKDKSIITTDSRFIEDLKADSLDTVELMMAIEVEYGIDIPDDEATKIKTVSDVIKYIKERQS.

Positions 10 to 85 constitute a Carrier domain; it reads DKIEQKVIEM…DVIKYIKERQ (76 aa). Ser45 is subject to O-(pantetheine 4'-phosphoryl)serine.

This sequence belongs to the acyl carrier protein (ACP) family. Post-translationally, 4'-phosphopantetheine is transferred from CoA to a specific serine of apo-ACP by AcpS. This modification is essential for activity because fatty acids are bound in thioester linkage to the sulfhydryl of the prosthetic group.

The protein localises to the cytoplasm. It functions in the pathway lipid metabolism; fatty acid biosynthesis. Its function is as follows. Carrier of the growing fatty acid chain in fatty acid biosynthesis. The protein is Acyl carrier protein of Rickettsia africae (strain ESF-5).